A 184-amino-acid chain; its full sequence is UPF0301 protein RHOS4_26140 (184 aa).

It belongs to the UPF0301 (AlgH) family.

This is UPF0301 protein RHOS4_26140 from Cereibacter sphaeroides (strain ATCC 17023 / DSM 158 / JCM 6121 / CCUG 31486 / LMG 2827 / NBRC 12203 / NCIMB 8253 / ATH 2.4.1.) (Rhodobacter sphaeroides).